A 327-amino-acid polypeptide reads, in one-letter code: MANAKPFCLLGFFCLLLQLFSIFHIGNGELEMNYYKESCPKAEEIIRQQVETLYYKHGNTAVSWLRNLFHDCVVKSCDASLLLETARGVESEQKSKRSFGMRNFKYVKIIKDALEKECPSTVSCADIVALSARDGIVMLKGPKIEMIKTGRRDSRGSYLGDVETLIPNHNDSLSSVISTFNSIGIDVEATVALLGAHSVGRVHCVNLVHRLYPTIDPTLDPSYALYLKKRCPSPTPDPNAVLYSRNDRETPMVVDNMYYKNIMAHKGLLVIDDELATDPRTAPFVAKMAADNNYFHEQFSRGVRLLSETNPLTGDQGEIRKDCRYVN.

Positions 1–28 (MANAKPFCLLGFFCLLLQLFSIFHIGNG) are cleaved as a signal peptide. 4 cysteine pairs are disulfide-bonded: Cys-39-Cys-118, Cys-72-Cys-77, Cys-124-Cys-323, and Cys-204-Cys-231. His-70 (proton acceptor) is an active-site residue. Ca(2+)-binding residues include Asp-71, Val-74, Asp-78, and Ser-80. A substrate-binding site is contributed by Pro-167. Asn-170 carries an N-linked (GlcNAc...) asparagine glycan. His-197 provides a ligand contact to heme b. Ser-198 contacts Ca(2+). 3 residues coordinate Ca(2+): Asp-247, Thr-250, and Asp-255.

It belongs to the peroxidase family. Classical plant (class III) peroxidase subfamily. Heme b is required as a cofactor. It depends on Ca(2+) as a cofactor. Preferentially expressed in roots and leaves, slightly in stems.

It catalyses the reaction 2 a phenolic donor + H2O2 = 2 a phenolic radical donor + 2 H2O. In terms of biological role, removal of H(2)O(2), oxidation of toxic reductants, biosynthesis and degradation of lignin, suberization, auxin catabolism, response to environmental stresses such as wounding, pathogen attack and oxidative stress. These functions might be dependent on each isozyme/isoform in each plant tissue. Its function is as follows. Might function as heat shock-like defense protein. May be implicated in the systemic acquired resistance response. The chain is Peroxidase 21 (PER21) from Arabidopsis thaliana (Mouse-ear cress).